We begin with the raw amino-acid sequence, 555 residues long: Hdr-like menaquinol oxidoreductase iron-sulfur subunit 2 (555 aa).

4Fe-4S ferredoxin-type domains lie at 82 to 111 and 151 to 180; these read RSFK…GDPK and KELY…AEIV. Residues Cys91, Cys94, Cys97, Cys101, Cys160, Cys163, Cys166, and Cys170 each coordinate [4Fe-4S] cluster.

Consists of five subunits: an integral membrane subunit, a cytochrome b-like subunit, a cytochrome c subunit and two iron-sulfur subunits. [4Fe-4S] cluster is required as a cofactor.

Its subcellular location is the cell membrane. Functionally, has menaquinol-oxidizing activity. HmeC and HmeD subunits may together mediate electron transfer from menaquinol to an unidentified electron acceptor on the cytoplasmic side of the membrane. The protein is Hdr-like menaquinol oxidoreductase iron-sulfur subunit 2 (hmeD) of Archaeoglobus fulgidus (strain ATCC 49558 / DSM 4304 / JCM 9628 / NBRC 100126 / VC-16).